Consider the following 169-residue polypeptide: T-cell receptor gamma chain C region DFL12 (169 aa).

Residues 1–136 (PSDKRLDADI…LQFMSTSAYY (136 aa)) are c region. The helical transmembrane segment at 137 to 157 (TYLLLLLKSVIYLAIISFSLL) threads the bilayer. Residues 158 to 169 (RRTSVCCNEKRS) are Cytoplasmic-facing.

It localises to the membrane. This is T-cell receptor gamma chain C region DFL12 from Mus musculus (Mouse).